The following is a 513-amino-acid chain: Putative thymidine phosphorylase (513 aa).

Belongs to the thymidine/pyrimidine-nucleoside phosphorylase family. Type 2 subfamily.

The enzyme catalyses thymidine + phosphate = 2-deoxy-alpha-D-ribose 1-phosphate + thymine. This Rhodopseudomonas palustris (strain BisA53) protein is Putative thymidine phosphorylase.